Consider the following 462-residue polypeptide: tRNA modification GTPase MnmE (462 aa).

The (6S)-5-formyl-5,6,7,8-tetrahydrofolate site is built by R26, E91, and R130. Residues G228 to F382 enclose the TrmE-type G domain. N238 contributes to the K(+) binding site. GTP-binding positions include N238 to Q243, T257 to T263, and D282 to G285. Residue S242 coordinates Mg(2+). K(+) is bound by residues T257, I259, and T262. Residue T263 participates in Mg(2+) binding. K462 provides a ligand contact to (6S)-5-formyl-5,6,7,8-tetrahydrofolate.

Belongs to the TRAFAC class TrmE-Era-EngA-EngB-Septin-like GTPase superfamily. TrmE GTPase family. Homodimer. Heterotetramer of two MnmE and two MnmG subunits. K(+) is required as a cofactor.

The protein resides in the cytoplasm. Its function is as follows. Exhibits a very high intrinsic GTPase hydrolysis rate. Involved in the addition of a carboxymethylaminomethyl (cmnm) group at the wobble position (U34) of certain tRNAs, forming tRNA-cmnm(5)s(2)U34. The chain is tRNA modification GTPase MnmE from Streptococcus agalactiae.